The chain runs to 305 residues: Protein MFI (305 aa).

As to quaternary structure, can homodimerize. Interacts with MFF; the interaction inhibits MFF interaction with DNM1L.

It localises to the cytoplasm. Its subcellular location is the cytosol. The protein localises to the mitochondrion outer membrane. In terms of biological role, acts as an inhibitor of mitochondrial fission. Interacts with MFF and prevents DNM1L recruitment to mitochondria, promoting a more fused mitochondrial network. In Rattus norvegicus (Rat), this protein is Protein MFI.